The primary structure comprises 594 residues: MTAIPDWKLQLLARRRQEEAAVRGREKAERDRLSQMPAWKRGILERRRAKLGLPPGEGSPVPGNAEAGPPDPDESAVLLEAIGPVHQNRFIQQERQRQQQQQQQQRNEVLGDRKAGPLEVLERRSSPGNLRDQSPKGRESREERLSPRESRDRRLVIGGAQESSSRSLRDWRQSPAEARDLSSRPAEAQKWRLSPGETPEESLRLAGSGDDSPKRKEVLESILSPGEPGDQKASPTDVHKWNLDSREPQKQSLIQLEATEWRLKSGEERKDYLEGCGREEEKLSSGIVPVTKEVQDITSSEVETAEQRPTESWKWTLNSGKARERTTWDIDTQTQKPDPPASSEKHPGPSGMEAEEEAEKEEAEAQSRPLRAQQNLCSGPSPLPPEHSGTEGSRQQEEEAAEPRPPTPAPLSPPPSAPTAPQPSGDPLMSRLFYGVKPGPGVGAPRRSGHTFTVNPRRCAPPASPAPPVNPATADAAGSGSGKKRYPTAEEILVLGGYLRLSRSCLVKGSPERHHKQLKISFSETALETTYQYPSESSVLEDLGPEPETPIAPLATQPDEEEEEEEEEEELLLQPGLQGGLRTKALIVDESCRR.

Composition is skewed to basic and acidic residues over residues 18 to 33 (EEAA…RDRL) and 109 to 125 (VLGD…ERRS). 2 disordered regions span residues 18–238 (EEAA…PTDV) and 294–485 (VQDI…GKKR). 4 positions are modified to phosphoserine: S126, S134, S174, and S194. 2 stretches are compositionally biased toward basic and acidic residues: residues 133 to 155 (QSPK…DRRL) and 167 to 190 (SLRD…EAQK). T198 carries the phosphothreonine modification. The residue at position 224 (S224) is a Phosphoserine. A compositionally biased stretch (acidic residues) spans 353 to 364 (EAEEEAEKEEAE). Positions 403–421 (PRPPTPAPLSPPPSAPTAP) are enriched in pro residues. S412 carries the post-translational modification Phosphoserine. Position 437 is an N6-acetyllysine (K437). S510 bears the Phosphoserine mark. Positions 531–577 (YQYPSESSVLEDLGPEPETPIAPLATQPDEEEEEEEEEEELLLQPGL) are disordered. The segment covering 558-571 (PDEEEEEEEEEEEL) has biased composition (acidic residues).

Interacts with Protein phosphatase 1 (PP1).

The protein localises to the cytoplasm. Its subcellular location is the cytoskeleton. In terms of biological role, may target protein phosphatase 1 to F-actin cytoskeleton. The polypeptide is Phostensin (Ppp1r18) (Mus musculus (Mouse)).